A 393-amino-acid polypeptide reads, in one-letter code: Formate-dependent phosphoribosylglycinamide formyltransferase (393 aa).

N(1)-(5-phospho-beta-D-ribosyl)glycinamide is bound by residues 22-23 (EL) and Glu-82. ATP-binding positions include Arg-114, Lys-155, 160 to 165 (SSGHGQ), 195 to 198 (EGFV), and Glu-203. One can recognise an ATP-grasp domain in the interval 119–308 (RLAAEELGLP…EFALHARAIL (190 aa)). The Mg(2+) site is built by Glu-267 and Glu-279. Residues Asp-286, Lys-356, and 363–364 (RR) contribute to the N(1)-(5-phospho-beta-D-ribosyl)glycinamide site.

It belongs to the PurK/PurT family. Homodimer.

The enzyme catalyses N(1)-(5-phospho-beta-D-ribosyl)glycinamide + formate + ATP = N(2)-formyl-N(1)-(5-phospho-beta-D-ribosyl)glycinamide + ADP + phosphate + H(+). It participates in purine metabolism; IMP biosynthesis via de novo pathway; N(2)-formyl-N(1)-(5-phospho-D-ribosyl)glycinamide from N(1)-(5-phospho-D-ribosyl)glycinamide (formate route): step 1/1. Involved in the de novo purine biosynthesis. Catalyzes the transfer of formate to 5-phospho-ribosyl-glycinamide (GAR), producing 5-phospho-ribosyl-N-formylglycinamide (FGAR). Formate is provided by PurU via hydrolysis of 10-formyl-tetrahydrofolate. This is Formate-dependent phosphoribosylglycinamide formyltransferase from Pasteurella multocida (strain Pm70).